The primary structure comprises 97 residues: U-reduvitoxin-Pr11a (97 aa).

The first 20 residues, 1–20 (MKTALFLVFALAFIAVEGKM), serve as a signal peptide directing secretion. Pacifastin domains lie at 22–59 (RACSKPGQTVLAPDGCNHCRCSEKGILMACTKMMCPPR) and 62–97 (EKSCKPGTTFKHKDGCNTCKCSDDGKNALCTSKLCL). Disulfide bonds link C24–C42, C37–C56, and C40–C51. The segment at 57–59 (PPR) is pro-Pro-Arg motif necessary for proteolytic processing. 3 cysteine pairs are disulfide-bonded: C65/C82, C77/C96, and C80/C91.

It belongs to the protease inhibitor I19 family. In terms of tissue distribution, expressed by the venom gland.

The protein localises to the secreted. Inhibits trypsin activity and prophenoloxidase (PPO) activation, an enzyme essential for both clotting and insect innate immune responses. It does not inhibit activity of chymotrypsin and protease K, and has no effect on phenoloxidase (PO) activity. The chain is U-reduvitoxin-Pr11a from Platymeris rhadamanthus (Red spot assassin bug).